The chain runs to 438 residues: Glutamyl-tRNA(Gln) amidotransferase subunit D (438 aa).

The Asparaginase/glutaminase domain occupies 92-422 (PEVTIIGTGG…EEVRKMMLTN (331 aa)). Catalysis depends on residues Thr-102, Thr-178, Asp-179, and Lys-256.

Belongs to the asparaginase 1 family. GatD subfamily. Heterodimer of GatD and GatE.

The enzyme catalyses L-glutamyl-tRNA(Gln) + L-glutamine + ATP + H2O = L-glutaminyl-tRNA(Gln) + L-glutamate + ADP + phosphate + H(+). Allows the formation of correctly charged Gln-tRNA(Gln) through the transamidation of misacylated Glu-tRNA(Gln) in organisms which lack glutaminyl-tRNA synthetase. The reaction takes place in the presence of glutamine and ATP through an activated gamma-phospho-Glu-tRNA(Gln). The GatDE system is specific for glutamate and does not act on aspartate. In Pyrococcus abyssi (strain GE5 / Orsay), this protein is Glutamyl-tRNA(Gln) amidotransferase subunit D.